Reading from the N-terminus, the 383-residue chain is Neuropeptide Y receptor type 1 (383 aa).

The Extracellular portion of the chain corresponds to 1–44 (MNSTSFSQVENHSIYYNFSEKNSRFLAFENDDCHLPLAMIFTLA). N-linked (GlcNAc...) asparagine glycans are attached at residues Asn-2, Asn-11, and Asn-17. Residues 45–65 (LAYGAVIILGVSGNLALIIII) traverse the membrane as a helical segment. The Cytoplasmic portion of the chain corresponds to 66–76 (LKQKEMRNVTN). Residues 77-97 (ILIVNLSFSDLLVAIMCLPFT) traverse the membrane as a helical segment. The Extracellular portion of the chain corresponds to 98 to 116 (FVYTLMDHWVFGEAMCKLN). An intrachain disulfide couples Cys-113 to Cys-198. A helical membrane pass occupies residues 117 to 137 (PFVQCVSITVSIFSLVLIAVE). Residues 138–154 (RHQLIINPRGWRPNNRH) are Cytoplasmic-facing. A helical membrane pass occupies residues 155 to 175 (AYVGIAVIWVLAVASSLPFLI). Residues 176–211 (YQVLTDEPFQNVTLDAFKDKYVCFDKFPSDSHRLSY) are Extracellular-facing. Residue Asn-186 is glycosylated (N-linked (GlcNAc...) asparagine). A helical transmembrane segment spans residues 212 to 232 (TTLLLVLQYFGPLCFIFICYF). Over 233–260 (KIYVRLKRRNSMMDKMRDNKYRSSEAKR) the chain is Cytoplasmic. The chain crosses the membrane as a helical span at residues 261 to 281 (INIMLLSIVVAFAVCWLPLTI). Residues 282–299 (FNTVFDWDHQIIATCNHN) lie on the Extracellular side of the membrane. A helical transmembrane segment spans residues 300 to 320 (LLFLLCHLTAMISTCVNPIFY). At 321–383 (GFLNKNFQRD…KIHTDDNEKI (63 aa)) the chain is on the cytoplasmic side. Cys-338 carries S-palmitoyl cysteine lipidation. Ser-368 carries the phosphoserine modification.

It belongs to the G-protein coupled receptor 1 family.

It localises to the cell membrane. Its function is as follows. Receptor for neuropeptide Y and peptide YY. This is Neuropeptide Y receptor type 1 (NPY1R) from Bos taurus (Bovine).